A 239-amino-acid chain; its full sequence is Ribose-5-phosphate isomerase A (239 aa).

Substrate-binding positions include 34–37 (TGST), 94–97 (DGAD), and 107–110 (KGGG). E116 functions as the Proton acceptor in the catalytic mechanism. K134 is a binding site for substrate.

This sequence belongs to the ribose 5-phosphate isomerase family. As to quaternary structure, homodimer.

The enzyme catalyses aldehydo-D-ribose 5-phosphate = D-ribulose 5-phosphate. The protein operates within carbohydrate degradation; pentose phosphate pathway; D-ribose 5-phosphate from D-ribulose 5-phosphate (non-oxidative stage): step 1/1. In terms of biological role, catalyzes the reversible conversion of ribose-5-phosphate to ribulose 5-phosphate. The polypeptide is Ribose-5-phosphate isomerase A (Treponema denticola (strain ATCC 35405 / DSM 14222 / CIP 103919 / JCM 8153 / KCTC 15104)).